The primary structure comprises 212 residues: Pyrrolidone-carboxylate peptidase (212 aa).

Active-site residues include Glu78, Cys141, and His165.

The protein belongs to the peptidase C15 family. As to quaternary structure, homotetramer.

It is found in the cytoplasm. It carries out the reaction Release of an N-terminal pyroglutamyl group from a polypeptide, the second amino acid generally not being Pro.. Its function is as follows. Removes 5-oxoproline from various penultimate amino acid residues except L-proline. The protein is Pyrrolidone-carboxylate peptidase of Staphylococcus aureus (strain NCTC 8325 / PS 47).